The primary structure comprises 27 residues: Caerulein precursor fragment R4 (27 aa).

In terms of tissue distribution, expressed by the skin glands.

It is found in the secreted. Its function is as follows. Antimicrobial peptide. This Xenopus ruwenzoriensis (Uganda clawed frog) protein is Caerulein precursor fragment R4.